The chain runs to 394 residues: Nuclear pore glycoprotein p62 (394 aa).

5 repeat units span residues 22–23 (FG), 50–51 (FG), 75–76 (FG), 77–78 (FG), and 116–117 (FG). Positions 22 to 117 (FGLSTGTPAA…GTSAAPPAFG (96 aa)) are 5 X 2 AA repeats of F-G. Low complexity predominate over residues 45 to 57 (KTTFSFGTPAPTA). The tract at residues 45–73 (KTTFSFGTPAPTAGIGGGDADNSKAQAPP) is disordered. A coiled-coil region spans residues 211 to 341 (SYHQLEEHIN…DNLNEANKGQ (131 aa)).

It belongs to the nucleoporin NSP1/NUP62 family. As to expression, expressed in adult male accessory glands (at protein level).

It is found in the nucleus. The protein localises to the chromosome. It localises to the nucleus envelope. The protein resides in the nuclear pore complex. Its subcellular location is the cytoplasm. It is found in the cytoskeleton. The protein localises to the spindle pole. It localises to the microtubule organizing center. The protein resides in the centrosome. Essential component of the nuclear pore complex. The N-terminal is probably involved in nucleocytoplasmic transport. The C-terminal is involved in protein-protein interaction probably via coiled-coil formation, promotes its association with centrosomes and may function in anchorage of Nup62 to the pore complex. Binds to transcriptionally active genes. Negatively regulates chromatin attachment to the nuclear envelope, probably by preventing chromatin tethering by Nup154. The chain is Nuclear pore glycoprotein p62 from Drosophila melanogaster (Fruit fly).